Here is a 396-residue protein sequence, read N- to C-terminus: Putative T-box protein 39 (396 aa).

Residues 11 to 192 (MAEEDRWKQW…KNSTYGNRLD (182 aa)) constitute a DNA-binding region (T-box). Positions 185–215 (STYGNRLDGGNKRKNTDSSEERTSKRSKNET) are disordered. Residues 193-215 (GGNKRKNTDSSEERTSKRSKNET) are compositionally biased toward basic and acidic residues.

It is found in the nucleus. This chain is Putative T-box protein 39 (tbx-39), found in Caenorhabditis elegans.